Reading from the N-terminus, the 162-residue chain is Crossover junction endodeoxyribonuclease RuvC (162 aa).

Residues D7, E67, and D140 contribute to the active site. Residues D7, E67, and D140 each contribute to the Mg(2+) site.

Belongs to the RuvC family. Homodimer which binds Holliday junction (HJ) DNA. The HJ becomes 2-fold symmetrical on binding to RuvC with unstacked arms; it has a different conformation from HJ DNA in complex with RuvA. In the full resolvosome a probable DNA-RuvA(4)-RuvB(12)-RuvC(2) complex forms which resolves the HJ. Mg(2+) is required as a cofactor.

The protein resides in the cytoplasm. It catalyses the reaction Endonucleolytic cleavage at a junction such as a reciprocal single-stranded crossover between two homologous DNA duplexes (Holliday junction).. Functionally, the RuvA-RuvB-RuvC complex processes Holliday junction (HJ) DNA during genetic recombination and DNA repair. Endonuclease that resolves HJ intermediates. Cleaves cruciform DNA by making single-stranded nicks across the HJ at symmetrical positions within the homologous arms, yielding a 5'-phosphate and a 3'-hydroxyl group; requires a central core of homology in the junction. The consensus cleavage sequence is 5'-(A/T)TT(C/G)-3'. Cleavage occurs on the 3'-side of the TT dinucleotide at the point of strand exchange. HJ branch migration catalyzed by RuvA-RuvB allows RuvC to scan DNA until it finds its consensus sequence, where it cleaves and resolves the cruciform DNA. The protein is Crossover junction endodeoxyribonuclease RuvC of Pseudothermotoga lettingae (strain ATCC BAA-301 / DSM 14385 / NBRC 107922 / TMO) (Thermotoga lettingae).